The primary structure comprises 348 residues: Protein RecA (348 aa).

Residue 65–72 coordinates ATP; that stretch reads GPESSGKT.

This sequence belongs to the RecA family.

The protein localises to the cytoplasm. Its function is as follows. Can catalyze the hydrolysis of ATP in the presence of single-stranded DNA, the ATP-dependent uptake of single-stranded DNA by duplex DNA, and the ATP-dependent hybridization of homologous single-stranded DNAs. It interacts with LexA causing its activation and leading to its autocatalytic cleavage. The chain is Protein RecA from Enterococcus faecalis (strain ATCC 700802 / V583).